The chain runs to 523 residues: Jerky protein homolog-like (523 aa).

One can recognise an HTH psq-type domain in the interval 1 to 52 (MSGKRKRVVLTIKDKLDIIKKLEDGGSSKQLAVIYGIGETTVRDIRKNKEKI). DNA-binding regions (H-T-H motif) lie at residues 28–48 (SKQLAVIYGIGETTVRDIRKN) and 100–132 (PICAKRAEFFFYALGMDGDFNPSAGWLTRFKQR). Residues 67 to 139 (KRKSMKPSMY…KQRHSIREIN (73 aa)) form the HTH CENPB-type domain. In terms of domain architecture, DDE-1 spans 168–385 (LQPEQIYNAD…VKPVTISRAW (218 aa)).

Belongs to the tigger transposable element derived protein family.

The protein localises to the nucleus. The polypeptide is Jerky protein homolog-like (Jrkl) (Mus musculus (Mouse)).